Reading from the N-terminus, the 498-residue chain is Glycerol kinase (498 aa).

ADP is bound at residue T12. T12, T13, and S14 together coordinate ATP. Sn-glycerol 3-phosphate is bound at residue T12. R16 is an ADP binding site. Sn-glycerol 3-phosphate is bound by residues R82, E83, and Y134. Glycerol contacts are provided by R82, E83, and Y134. H230 carries the post-translational modification Phosphohistidine; by HPr. Position 244 (D244) interacts with sn-glycerol 3-phosphate. Glycerol is bound by residues D244 and Q245. 2 residues coordinate ADP: T266 and G309. ATP contacts are provided by T266, G309, Q313, and G410. Residues G410 and N414 each coordinate ADP.

It belongs to the FGGY kinase family. In terms of assembly, homotetramer and homodimer (in equilibrium). The phosphoenolpyruvate-dependent sugar phosphotransferase system (PTS), including enzyme I, and histidine-containing protein (HPr) are required for the phosphorylation, which leads to the activation of the enzyme.

The enzyme catalyses glycerol + ATP = sn-glycerol 3-phosphate + ADP + H(+). It participates in polyol metabolism; glycerol degradation via glycerol kinase pathway; sn-glycerol 3-phosphate from glycerol: step 1/1. With respect to regulation, activated by phosphorylation and inhibited by fructose 1,6-bisphosphate (FBP). In terms of biological role, key enzyme in the regulation of glycerol uptake and metabolism. Catalyzes the phosphorylation of glycerol to yield sn-glycerol 3-phosphate. This chain is Glycerol kinase, found in Staphylococcus aureus (strain MW2).